The chain runs to 46 residues: Cytochrome b559 subunit beta (46 aa).

A helical transmembrane segment spans residues 21–37 (WLALHTLGIPTVFFLGA). Residue histidine 25 participates in heme binding.

Belongs to the PsbE/PsbF family. Heterodimer of an alpha subunit and a beta subunit. PSII is composed of 1 copy each of membrane proteins PsbA, PsbB, PsbC, PsbD, PsbE, PsbF, PsbH, PsbI, PsbJ, PsbK, PsbL, PsbM, PsbT, PsbX, PsbY, PsbZ, Psb30/Ycf12, peripheral proteins PsbO, CyanoQ (PsbQ), PsbU, PsbV and a large number of cofactors. It forms dimeric complexes. Requires heme b as cofactor.

It is found in the cellular thylakoid membrane. In terms of biological role, this b-type cytochrome is tightly associated with the reaction center of photosystem II (PSII). PSII is a light-driven water:plastoquinone oxidoreductase that uses light energy to abstract electrons from H(2)O, generating O(2) and a proton gradient subsequently used for ATP formation. It consists of a core antenna complex that captures photons, and an electron transfer chain that converts photonic excitation into a charge separation. The chain is Cytochrome b559 subunit beta from Synechococcus sp. (strain CC9605).